The following is a 257-amino-acid chain: tRNA-cytidine(32) 2-sulfurtransferase (257 aa).

The PP-loop motif signature appears at 37–42 (SGGKDS). Residues Cys112, Cys115, and Cys202 each coordinate [4Fe-4S] cluster.

It belongs to the TtcA family. As to quaternary structure, homodimer. Mg(2+) is required as a cofactor. The cofactor is [4Fe-4S] cluster.

It localises to the cytoplasm. It catalyses the reaction cytidine(32) in tRNA + S-sulfanyl-L-cysteinyl-[cysteine desulfurase] + AH2 + ATP = 2-thiocytidine(32) in tRNA + L-cysteinyl-[cysteine desulfurase] + A + AMP + diphosphate + H(+). It functions in the pathway tRNA modification. Catalyzes the ATP-dependent 2-thiolation of cytidine in position 32 of tRNA, to form 2-thiocytidine (s(2)C32). The sulfur atoms are provided by the cysteine/cysteine desulfurase (IscS) system. This Geobacter sulfurreducens (strain ATCC 51573 / DSM 12127 / PCA) protein is tRNA-cytidine(32) 2-sulfurtransferase.